Consider the following 357-residue polypeptide: 3-isopropylmalate dehydrogenase (357 aa).

76–89 contributes to the NAD(+) binding site; sequence GPKWDNEPSHNRPE. Substrate is bound by residues R96, R106, R135, and D223. 3 residues coordinate Mg(2+): D223, D247, and D251. 281-293 contacts NAD(+); the sequence is GSAPDIAGQDKAN.

This sequence belongs to the isocitrate and isopropylmalate dehydrogenases family. LeuB type 1 subfamily. Homodimer. Mg(2+) is required as a cofactor. It depends on Mn(2+) as a cofactor.

Its subcellular location is the cytoplasm. It catalyses the reaction (2R,3S)-3-isopropylmalate + NAD(+) = 4-methyl-2-oxopentanoate + CO2 + NADH. Its pathway is amino-acid biosynthesis; L-leucine biosynthesis; L-leucine from 3-methyl-2-oxobutanoate: step 3/4. Its function is as follows. Catalyzes the oxidation of 3-carboxy-2-hydroxy-4-methylpentanoate (3-isopropylmalate) to 3-carboxy-4-methyl-2-oxopentanoate. The product decarboxylates to 4-methyl-2 oxopentanoate. This is 3-isopropylmalate dehydrogenase from Helicobacter hepaticus (strain ATCC 51449 / 3B1).